The sequence spans 143 residues: MKPSFRRKARACALQVLYSWEISHNNIKESAIYFLKEKNKKNIDIVYFYELIIGITYDCKNIDNLMKPYLFRSLKELGHIERAILRISFYELHKRNDIPYKVSINEGIELAKLFGSEDSHKFINGVLDKAVFKMGYNKKVVIT.

This sequence belongs to the NusB family.

Involved in transcription antitermination. Required for transcription of ribosomal RNA (rRNA) genes. Binds specifically to the boxA antiterminator sequence of the ribosomal RNA (rrn) operons. This chain is Transcription antitermination protein NusB, found in Buchnera aphidicola subsp. Acyrthosiphon pisum (strain 5A).